We begin with the raw amino-acid sequence, 408 residues long: Heparan-sulfate 6-O-sulfotransferase 1 (408 aa).

Residues 8–14 (MVERTSK) lie on the Cytoplasmic side of the membrane. Residues 15–35 (FLLIVAASVCFMLILYQYVGP) form a helical; Signal-anchor for type II membrane protein membrane-spanning segment. The Lumenal portion of the chain corresponds to 36–408 (GLSLGAPSGR…DYMSHIIEKW (373 aa)). 90 to 98 (HIQKTGGTT) is a binding site for 3'-phosphoadenylyl sulfate. Substrate contacts are provided by residues 120–121 (KK), R137, W142, and H147. H147 acts as the Proton acceptor in catalysis. Residues R182 and S190 each contribute to the 3'-phosphoadenylyl sulfate site. Positions 194 and 201 each coordinate substrate. N261 is a glycosylation site (N-linked (GlcNAc...) asparagine). 314–316 (MQY) is a 3'-phosphoadenylyl sulfate binding site. A glycan (N-linked (GlcNAc...) asparagine) is linked at N317. 320 to 321 (RA) contributes to the 3'-phosphoadenylyl sulfate binding site. The N-linked (GlcNAc...) asparagine glycan is linked to N328. A coiled-coil region spans residues 348–382 (AKDLFQQRYQYKRQLERMEQRIKNREERLLHRSNE). Positions 376–396 (LLHRSNEALPKEETEEQGRLP) are disordered.

It belongs to the sulfotransferase 6 family. N-glycosylated.

It is found in the membrane. The enzyme catalyses alpha-D-glucosaminyl-[heparan sulfate](n) + 3'-phosphoadenylyl sulfate = 6-sulfo-alpha-D-glucosaminyl-[heparan sulfate](n) + adenosine 3',5'-bisphosphate + H(+). 6-O-sulfation enzyme which catalyzes the transfer of sulfate from 3'-phosphoadenosine 5'-phosphosulfate (PAPS) to position 6 of the N-sulfoglucosamine residue (GlcNS) of heparan sulfate. May also play a role in limb development. This chain is Heparan-sulfate 6-O-sulfotransferase 1, found in Gallus gallus (Chicken).